Reading from the N-terminus, the 93-residue chain is Translation initiation factor IF-1 (93 aa).

The S1-like domain occupies 1–72 (MAKEELIQFE…EKGRLIFRHK (72 aa)). The disordered stretch occupies residues 70 to 93 (RHKDERPGGPPRSGPPRGGQFRRR).

The protein belongs to the IF-1 family. As to quaternary structure, component of the 30S ribosomal translation pre-initiation complex which assembles on the 30S ribosome in the order IF-2 and IF-3, IF-1 and N-formylmethionyl-tRNA(fMet); mRNA recruitment can occur at any time during PIC assembly.

Its subcellular location is the cytoplasm. Its function is as follows. One of the essential components for the initiation of protein synthesis. Stabilizes the binding of IF-2 and IF-3 on the 30S subunit to which N-formylmethionyl-tRNA(fMet) subsequently binds. Helps modulate mRNA selection, yielding the 30S pre-initiation complex (PIC). Upon addition of the 50S ribosomal subunit IF-1, IF-2 and IF-3 are released leaving the mature 70S translation initiation complex. This is Translation initiation factor IF-1 from Nitrobacter winogradskyi (strain ATCC 25391 / DSM 10237 / CIP 104748 / NCIMB 11846 / Nb-255).